The primary structure comprises 137 residues: Holo-[acyl-carrier-protein] synthase (137 aa).

2 residues coordinate Mg(2+): Asp8 and Glu58.

Belongs to the P-Pant transferase superfamily. AcpS family. It depends on Mg(2+) as a cofactor.

The protein resides in the cytoplasm. It catalyses the reaction apo-[ACP] + CoA = holo-[ACP] + adenosine 3',5'-bisphosphate + H(+). Transfers the 4'-phosphopantetheine moiety from coenzyme A to a Ser of acyl-carrier-protein. In Lactobacillus delbrueckii subsp. bulgaricus (strain ATCC 11842 / DSM 20081 / BCRC 10696 / JCM 1002 / NBRC 13953 / NCIMB 11778 / NCTC 12712 / WDCM 00102 / Lb 14), this protein is Holo-[acyl-carrier-protein] synthase.